The primary structure comprises 745 residues: Single-minded homolog 1-A (745 aa).

The region spanning 1-53 is the bHLH domain; the sequence is MKEKSKNAGRTRREKENSEFYELAKLLPLPSAITSQSDKASIIRLTTSYLKMR. PAS domains lie at 77-147 and 218-288; these read GREL…QPYH and PPSA…LVKG. The Single-minded C-terminal domain occupies 336 to 745; that stretch reads EYKGLQLSLD…GTSVIITNGS (410 aa). Over residues 350 to 364 the composition is skewed to polar residues; that stretch reads TKPSFTYNSPSNPVT. Disordered stretches follow at residues 350-413 and 529-563; these read TKPS…LTDS and EDSAVSSAPDGGSASDSGDRFRADQCRSSPQEPSK. The Nuclear localization signal signature appears at 368 to 387; sequence RVGKSRVSRTKTKTRLSPYS. The segment covering 369 to 381 has biased composition (basic residues); sequence VGKSRVSRTKTKT. Residues 532–544 are compositionally biased toward low complexity; the sequence is AVSSAPDGGSASD.

In terms of assembly, efficient DNA binding requires dimerization with another bHLH protein. Heterodimer of sim1a and arnt. In terms of tissue distribution, expressed in embryonic forebrain at the eleven somite stage. Detected in brain throughout embryonic development.

It localises to the nucleus. Its function is as follows. Transcriptional factor that may have pleiotropic effects during embryogenesis and in the adult. In Danio rerio (Zebrafish), this protein is Single-minded homolog 1-A (sim1a).